Here is a 277-residue protein sequence, read N- to C-terminus: Caspase-3 (277 aa).

Residue M1 is modified to N-acetylmethionine. Propeptides lie at residues M1–D9 and A10–D28. The residue at position 11 (K11) is an N6-acetyllysine. A Phosphoserine modification is found at S26. Catalysis depends on residues H121 and C163. C163 bears the S-nitrosocysteine; in inhibited form mark.

This sequence belongs to the peptidase C14A family. Heterotetramer that consists of two anti-parallel arranged heterodimers, each one formed by a 17 kDa (p17) and a 12 kDa (p12) subunit. Interacts with BIRC6/bruce. Cleavage by granzyme B, caspase-6, caspase-8 and caspase-10 generates the two active subunits. Additional processing of the propeptides is likely due to the autocatalytic activity of the activated protease. Active heterodimers between the small subunit of caspase-7 protease and the large subunit of caspase-3 also occur and vice versa. In terms of processing, S-nitrosylated on its catalytic site cysteine in unstimulated cell lines and denitrosylated upon activation of the Fas apoptotic pathway, associated with an increase in intracellular caspase activity. Fas therefore activates caspase-3 not only by inducing the cleavage of the caspase zymogen to its active subunits, but also by stimulating the denitrosylation of its active site thiol. Post-translationally, ubiquitinated by BIRC6; this activity is inhibited by DIABLO/SMAC.

The protein localises to the cytoplasm. The catalysed reaction is Strict requirement for an Asp residue at positions P1 and P4. It has a preferred cleavage sequence of Asp-Xaa-Xaa-Asp-|- with a hydrophobic amino-acid residue at P2 and a hydrophilic amino-acid residue at P3, although Val or Ala are also accepted at this position.. With respect to regulation, inhibited by BIRC6; following inhibition of BIRC6-caspase binding by DIABLO/SMAC, BIRC6 is subjected to caspase cleavage, leading to an increase in active caspases. Its function is as follows. Involved in the activation cascade of caspases responsible for apoptosis execution. At the onset of apoptosis, it proteolytically cleaves poly(ADP-ribose) polymerase PARP1 at a '216-Asp-|-Gly-217' bond. Cleaves and activates sterol regulatory element binding proteins (SREBPs) between the basic helix-loop-helix leucine zipper domain and the membrane attachment domain. Cleaves and activates caspase-6, -7 and -9 (CASP6, CASP7 and CASP9, respectively). Cleaves and inactivates interleukin-18 (IL18). Triggers cell adhesion in sympathetic neurons through RET cleavage. Cleaves IL-1 beta between an Asp and an Ala, releasing the mature cytokine which is involved in a variety of inflammatory processes. Cleaves and inhibits serine/threonine-protein kinase AKT1 in response to oxidative stress. Acts as an inhibitor of type I interferon production during virus-induced apoptosis by mediating cleavage of antiviral proteins CGAS, IRF3 and MAVS, thereby preventing cytokine overproduction. Also involved in pyroptosis by mediating cleavage and activation of gasdermin-E (GSDME). Cleaves XRCC4 and phospholipid scramblase proteins XKR4, XKR8 and XKR9, leading to promote phosphatidylserine exposure on apoptotic cell surface. Cleaves BIRC6 following inhibition of BIRC6-caspase binding by DIABLO/SMAC. The protein is Caspase-3 (CASP3) of Felis catus (Cat).